Here is a 116-residue protein sequence, read N- to C-terminus: MNNARLYQILRGPVFSEKSQMLGDSLGVQVFKIDSKATKLEVKKAVEMMFEGVEVLKVNTLNVKGKTKRFGKSIGRRNDYKKAYVTLKAGQDVQMADAGEEVANTTASTSETANNE.

This sequence belongs to the universal ribosomal protein uL23 family. In terms of assembly, part of the 50S ribosomal subunit. Contacts protein L29, and trigger factor when it is bound to the ribosome.

In terms of biological role, one of the early assembly proteins it binds 23S rRNA. One of the proteins that surrounds the polypeptide exit tunnel on the outside of the ribosome. Forms the main docking site for trigger factor binding to the ribosome. In Psychrobacter arcticus (strain DSM 17307 / VKM B-2377 / 273-4), this protein is Large ribosomal subunit protein uL23.